Reading from the N-terminus, the 778-residue chain is Phosphoribosylformylglycinamidine synthase subunit PurL (778 aa).

H44 is an active-site residue. 2 residues coordinate ATP: Y47 and K86. A Mg(2+)-binding site is contributed by E88. Residues 89–92 and R111 contribute to the substrate site; that span reads SHNH. The active-site Proton acceptor is H90. The Mg(2+) site is built by D112 and D265. A substrate-binding site is contributed by 309–311; it reads ESQ. A disordered region spans residues 455–474; that stretch reads TRQPPGEGLPGRSGQAGPPK. Positions 518 and 555 each coordinate ATP. N556 serves as a coordination point for Mg(2+). S558 lines the substrate pocket.

The protein belongs to the FGAMS family. Monomer. Part of the FGAM synthase complex composed of 1 PurL, 1 PurQ and 2 PurS subunits.

It is found in the cytoplasm. It carries out the reaction N(2)-formyl-N(1)-(5-phospho-beta-D-ribosyl)glycinamide + L-glutamine + ATP + H2O = 2-formamido-N(1)-(5-O-phospho-beta-D-ribosyl)acetamidine + L-glutamate + ADP + phosphate + H(+). Its pathway is purine metabolism; IMP biosynthesis via de novo pathway; 5-amino-1-(5-phospho-D-ribosyl)imidazole from N(2)-formyl-N(1)-(5-phospho-D-ribosyl)glycinamide: step 1/2. In terms of biological role, part of the phosphoribosylformylglycinamidine synthase complex involved in the purines biosynthetic pathway. Catalyzes the ATP-dependent conversion of formylglycinamide ribonucleotide (FGAR) and glutamine to yield formylglycinamidine ribonucleotide (FGAM) and glutamate. The FGAM synthase complex is composed of three subunits. PurQ produces an ammonia molecule by converting glutamine to glutamate. PurL transfers the ammonia molecule to FGAR to form FGAM in an ATP-dependent manner. PurS interacts with PurQ and PurL and is thought to assist in the transfer of the ammonia molecule from PurQ to PurL. This is Phosphoribosylformylglycinamidine synthase subunit PurL from Symbiobacterium thermophilum (strain DSM 24528 / JCM 14929 / IAM 14863 / T).